A 168-amino-acid polypeptide reads, in one-letter code: ATP synthase subunit d, mitochondrial (168 aa).

The protein belongs to the ATPase d subunit family. In terms of assembly, F-type ATPases have 2 components, CF(1) - the catalytic core - and CF(0) - the membrane proton channel. CF(0) seems to have nine subunits: a, b, c, d, e, f, g, F6 and 8 (or A6L).

Its subcellular location is the mitochondrion. It is found in the mitochondrion inner membrane. Functionally, mitochondrial membrane ATP synthase (F(1)F(0) ATP synthase or Complex V) produces ATP from ADP in the presence of a proton gradient across the membrane which is generated by electron transport complexes of the respiratory chain. F-type ATPases consist of two structural domains, F(1) - containing the extramembraneous catalytic core, and F(0) - containing the membrane proton channel, linked together by a central stalk and a peripheral stalk. During catalysis, ATP synthesis in the catalytic domain of F(1) is coupled via a rotary mechanism of the central stalk subunits to proton translocation. Part of the complex F(0) domain and the peripheric stalk, which acts as a stator to hold the catalytic alpha(3)beta(3) subcomplex and subunit a/ATP6 static relative to the rotary elements. The chain is ATP synthase subunit d, mitochondrial from Arabidopsis thaliana (Mouse-ear cress).